The following is a 466-amino-acid chain: Citrate synthase, mitochondrial (466 aa).

A mitochondrion-targeting transit peptide spans Met1–Ser27. The short motif at Ala2–Leu21 is the SIFI-degron element. Lys57 carries the post-translational modification N6-succinyllysine. Lys76 is modified (N6-acetyllysine; alternate). At Lys76 the chain carries N6-succinyllysine; alternate. Lys103 and Lys193 each carry N6-succinyllysine. Residue His301 is part of the active site. Lys321 and Lys327 each carry N6-acetyllysine; alternate. Residues Lys321 and Lys327 each carry the N6-succinyllysine; alternate modification. His347 is a catalytic residue. Arg356 contributes to the oxaloacetate binding site. Lys375 carries the post-translational modification N6-acetyllysine; alternate. Lys375 carries the post-translational modification N6-succinyllysine; alternate. Lys382 carries the post-translational modification N6-acetyllysine. Lys393 carries the post-translational modification N6-acetyllysine; alternate. N6-succinyllysine; alternate is present on Lys393. Lys395 is modified (N6,N6,N6-trimethyllysine). Asp402 is a catalytic residue. Oxaloacetate contacts are provided by Arg428 and Arg448. At Lys450 the chain carries N6-succinyllysine. N6-acetyllysine; alternate is present on Lys459. Position 459 is an N6-succinyllysine; alternate (Lys459).

It belongs to the citrate synthase family. In terms of assembly, homodimer. Post-translationally, methylated. Trimethylation at Lys-395 by CSKMT decreases citrate synthase activity. In response to mitochondrial stress, the precursor protein is ubiquitinated by the SIFI complex in the cytoplasm before mitochondrial import, leading to its degradation. Within the SIFI complex, UBR4 initiates ubiquitin chain that are further elongated or branched by KCMF1.

The protein localises to the mitochondrion matrix. The enzyme catalyses oxaloacetate + acetyl-CoA + H2O = citrate + CoA + H(+). Its pathway is carbohydrate metabolism; tricarboxylic acid cycle; isocitrate from oxaloacetate: step 1/2. Its function is as follows. Key enzyme of the Krebs tricarboxylic acid cycle which catalyzes the synthesis of citrate from acetyl coenzyme A and oxaloacetate. The sequence is that of Citrate synthase, mitochondrial (CS) from Homo sapiens (Human).